The following is a 77-amino-acid chain: Acyl carrier protein (77 aa).

In terms of domain architecture, Carrier spans 2–77; the sequence is SNIEERVKKI…AAIDYVSKNQ (76 aa). At serine 37 the chain carries O-(pantetheine 4'-phosphoryl)serine.

It belongs to the acyl carrier protein (ACP) family. In terms of processing, 4'-phosphopantetheine is transferred from CoA to a specific serine of apo-ACP by AcpS. This modification is essential for activity because fatty acids are bound in thioester linkage to the sulfhydryl of the prosthetic group.

It is found in the cytoplasm. Its pathway is lipid metabolism; fatty acid biosynthesis. Carrier of the growing fatty acid chain in fatty acid biosynthesis. This Shewanella oneidensis (strain ATCC 700550 / JCM 31522 / CIP 106686 / LMG 19005 / NCIMB 14063 / MR-1) protein is Acyl carrier protein.